Here is a 268-residue protein sequence, read N- to C-terminus: MERYETLFARLKERKEGAFVPFVTLGDPGIEQSLKIIDALIEAGADALELGIPFSDPLADGPTIQNATLRAFAAGVTPAQCFEMLGLIRQKHPNIPIGLLMYANLVFNKGIDEFYAQCEKVGVDSVLVADVPVEESAPFRQAALRHNVAPIFICPPNADEDLLRQIASYGRGYTYLLSRAGVTGAENRAALPLNHLVAKLKEYNAAPPLQGFGISAPDQVKAAIDAGAAGAISGSAIVKIIEQHINEPEKMLAVLKAFVQPMKAATRS.

Residues Glu-49 and Asp-60 each act as proton acceptor in the active site.

The protein belongs to the TrpA family. In terms of assembly, tetramer of two alpha and two beta chains.

It carries out the reaction (1S,2R)-1-C-(indol-3-yl)glycerol 3-phosphate + L-serine = D-glyceraldehyde 3-phosphate + L-tryptophan + H2O. The protein operates within amino-acid biosynthesis; L-tryptophan biosynthesis; L-tryptophan from chorismate: step 5/5. In terms of biological role, the alpha subunit is responsible for the aldol cleavage of indoleglycerol phosphate to indole and glyceraldehyde 3-phosphate. The chain is Tryptophan synthase alpha chain from Escherichia fergusonii (strain ATCC 35469 / DSM 13698 / CCUG 18766 / IAM 14443 / JCM 21226 / LMG 7866 / NBRC 102419 / NCTC 12128 / CDC 0568-73).